The following is a 232-amino-acid chain: Anti-sigma-K factor RskA (232 aa).

At 1–91 (MTEPTDFQLL…QSRRQPRWRT (91 aa)) the chain is on the cytoplasmic side. A helical membrane pass occupies residues 92–112 (AVFASAAAIAVGLGAFGLGVL). Topologically, residues 113–232 (TRPSASPTVA…GTVLAELPLR (120 aa)) are extracellular.

The protein belongs to the anti-sigma-K factor family.

It localises to the cell membrane. In terms of biological role, an anti-sigma factor for extracytoplasmic function (ECF) sigma factor SigK. ECF sigma factors are held in an inactive form by an anti-sigma factor until released by regulated intramembrane proteolysis (RIP). RIP occurs when an extracytoplasmic signal triggers a concerted proteolytic cascade to transmit information and elicit cellular responses. The membrane-spanning regulatory substrate protein is first cut extracytoplasmically (site-1 protease, S1P), then within the membrane itself (site-2 protease, S2P, Rip1), while cytoplasmic proteases finish degrading the regulatory protein, liberating the sigma factor. This is Anti-sigma-K factor RskA (rskA) from Mycobacterium ulcerans (strain Agy99).